We begin with the raw amino-acid sequence, 173 residues long: Ribosome maturation factor RimM (173 aa).

In terms of domain architecture, PRC barrel spans 97 to 170 (EHEYYYHEII…RIRVHIMEGL (74 aa)).

It belongs to the RimM family. Binds ribosomal protein uS19.

It localises to the cytoplasm. Functionally, an accessory protein needed during the final step in the assembly of 30S ribosomal subunit, possibly for assembly of the head region. Essential for efficient processing of 16S rRNA. May be needed both before and after RbfA during the maturation of 16S rRNA. It has affinity for free ribosomal 30S subunits but not for 70S ribosomes. In Shouchella clausii (strain KSM-K16) (Alkalihalobacillus clausii), this protein is Ribosome maturation factor RimM.